We begin with the raw amino-acid sequence, 353 residues long: MNSIDLASLAAATPTLRHDWTREQAAAIYNLPFADLIFRAQTIHRQSFDANEVQCNQLLNVKTGGCAEDCGYCSQSAHHDTALPASKLMDPKKVIEGAKAARDAGATRYCMGAAWRSPKDRDMAPVIEMVKGVKALGMEACMTLGMLTDDQAQQLADAGLDYYNHNIDTSEEFYSSVVKSRSFGDRLDTLATVQDAGIKVCCGGILGLGEKPTDRVEMLRTLANLPQHPESVPINMLIPIEGTPIAKTAKPVDPFEFVRTIALARIMMPKSDVRLAAGRTAMSDEMQSLCFLAGANSIFIGDTLLTTPNPGDSKDRMLFARLGITPREGAPVEAHSHDHDHDHHDHHHGHSHS.

A Radical SAM core domain is found at 51-270; the sequence is NEVQCNQLLN…IALARIMMPK (220 aa). [4Fe-4S] cluster-binding residues include cysteine 66, cysteine 70, and cysteine 73. [2Fe-2S] cluster-binding residues include cysteine 110, cysteine 141, cysteine 201, and arginine 274. The segment at 330–353 is disordered; sequence APVEAHSHDHDHDHHDHHHGHSHS. Positions 334–343 are enriched in basic and acidic residues; it reads AHSHDHDHDH. Over residues 344 to 353 the composition is skewed to basic residues; the sequence is HDHHHGHSHS.

It belongs to the radical SAM superfamily. Biotin synthase family. In terms of assembly, homodimer. Requires [4Fe-4S] cluster as cofactor. The cofactor is [2Fe-2S] cluster.

It catalyses the reaction (4R,5S)-dethiobiotin + (sulfur carrier)-SH + 2 reduced [2Fe-2S]-[ferredoxin] + 2 S-adenosyl-L-methionine = (sulfur carrier)-H + biotin + 2 5'-deoxyadenosine + 2 L-methionine + 2 oxidized [2Fe-2S]-[ferredoxin]. It functions in the pathway cofactor biosynthesis; biotin biosynthesis; biotin from 7,8-diaminononanoate: step 2/2. Catalyzes the conversion of dethiobiotin (DTB) to biotin by the insertion of a sulfur atom into dethiobiotin via a radical-based mechanism. The protein is Biotin synthase of Rhodopseudomonas palustris (strain HaA2).